Consider the following 349-residue polypeptide: Glycerol-3-phosphate dehydrogenase [NAD(+)], cytoplasmic (349 aa).

10 to 15 (GSGNWG) is a binding site for NAD(+). K120 provides a ligand contact to substrate. A153 is a binding site for NAD(+). S154 carries the post-translational modification Phosphoserine. The active-site Proton acceptor is the K204. An NAD(+)-binding site is contributed by R269. Substrate is bound at residue 269-270 (RN). N6-succinyllysine is present on K289. The NAD(+) site is built by K296 and Q298. Y326 bears the Phosphotyrosine mark.

Belongs to the NAD-dependent glycerol-3-phosphate dehydrogenase family. Homodimer.

The protein localises to the cytoplasm. It catalyses the reaction sn-glycerol 3-phosphate + NAD(+) = dihydroxyacetone phosphate + NADH + H(+). Has glycerol-3-phosphate dehydrogenase activity. The sequence is that of Glycerol-3-phosphate dehydrogenase [NAD(+)], cytoplasmic from Mus musculus (Mouse).